Here is a 745-residue protein sequence, read N- to C-terminus: MPLFKLTGQGKQIDDAMRSFAEKVFASEVKDEGGRHEISPFDVDEICPISLHEMQAHIFHMENLSMDGRRKRRFQGRKTVNLSIPQSETSSTKLSHIEEFISSSPTYESVPDFQRVQITGDYASGVTVEDFEVVCKGLYRALCIREKYMQKSFQRFPKTPSKYLRNIDGEALVGNESFYPVFTPPPKKGEDPFRTEDLPANLGYHLKMKAGVIYIYPDEAAANRDEPKPYPYPNLDDFLDDMNFLLALIAQGPVKTYAHRRLKFLSSKFQVHQMLNEMDELKELKNNPHRDFYNCRKVDTHIHAAACMNQKHLLRFIKKSYHIDADRVVYSTKEKSLTLKELFAKLNMHPYDLTVDSLDVHAGRQTFQRFDKFNDKYNPVGASELRDLYLKTDNYINGEYFATIIKEVGADLVEAKYQHAEPRLSIYGRSPDEWNKLSSWFVCNRIYCPNMTWMIQVPRIYDVFRSKNFLPHFGKMLENIFLPVFEATINPQAHPDLSVFLKHITGFDSVDDESKHSGHMFSSKSPKPEEWTMENNPSYTYYAYYMYANITVLNSLRKERGMNTFLFRPHCGEAGALTHLMTAFMIADNISHGLNLKKSPVLQYLFFLAQIPIAMSPLSNNSLFLEYAKNPFLDFLQKGLMISLSTDDPMQFHFTKEPLMEEYAIAAQVFKLSTCDMCEVARNSVLQCGISHEEKAKFLGNNYLEEGPVGNDIRRTNVAQIRMAYRYETWCYELNLIAEGLKATE.

Residue Thr-79 is modified to Phosphothreonine. The residue at position 83 (Ser-83) is a Phosphoserine. Tyr-214 carries the phosphotyrosine modification. Residues His-301 and His-303 each coordinate Zn(2+). Substrate contacts are provided by residues His-303 and 372–377 (KFNDKY). At Ser-439 the chain carries Phosphoserine. Position 570 (His-570) interacts with Zn(2+). Substrate is bound at residue Glu-573. The active-site Proton acceptor is His-592. Asp-647 is a binding site for Zn(2+). A substrate-binding site is contributed by 648–651 (DPMQ).

The protein belongs to the metallo-dependent hydrolases superfamily. Adenosine and AMP deaminases family. In terms of assembly, homotetramer. Requires Zn(2+) as cofactor.

The catalysed reaction is AMP + H2O + H(+) = IMP + NH4(+). It participates in purine metabolism; IMP biosynthesis via salvage pathway; IMP from AMP: step 1/1. Functionally, AMP deaminase plays a critical role in energy metabolism. This Mus musculus (Mouse) protein is AMP deaminase 1.